A 165-amino-acid polypeptide reads, in one-letter code: uncharacterized protein (165 aa).

Residues 8-159 (LLVNYKTLEE…QGVQEQTTKP (152 aa)) form the N-acetyltransferase domain.

This is an uncharacterized protein from Shouchella clausii (strain KSM-K16) (Alkalihalobacillus clausii).